We begin with the raw amino-acid sequence, 643 residues long: Threonine--tRNA ligase (643 aa).

Positions 1-61 (MIEIFIEDLN…NQSGNLKFLK (61 aa)) constitute a TGS domain. A catalytic region spans residues 246–539 (DHRKIGKDLE…LLEHYAGFLP (294 aa)). Positions 339, 390, and 516 each coordinate Zn(2+).

The protein belongs to the class-II aminoacyl-tRNA synthetase family. Homodimer. Zn(2+) is required as a cofactor.

Its subcellular location is the cytoplasm. It carries out the reaction tRNA(Thr) + L-threonine + ATP = L-threonyl-tRNA(Thr) + AMP + diphosphate + H(+). Functionally, catalyzes the attachment of threonine to tRNA(Thr) in a two-step reaction: L-threonine is first activated by ATP to form Thr-AMP and then transferred to the acceptor end of tRNA(Thr). Also edits incorrectly charged L-seryl-tRNA(Thr). In Sulfurihydrogenibium sp. (strain YO3AOP1), this protein is Threonine--tRNA ligase.